A 476-amino-acid chain; its full sequence is Protein transport protein Sec61 subunit alpha-like 1 (476 aa).

Topologically, residues 2–33 are cytoplasmic; it reads AIKFLEVIKPFCAVLPEIQKPERKIQFREKVL. Residues 34–53 form a helical membrane-spanning segment; the sequence is WTAITLFIFLVCCQIPLFGI. The Lumenal portion of the chain corresponds to 54 to 76; that stretch reads MSSDSADPFYWMRVILASNRGTL. A helical transmembrane segment spans residues 77-96; that stretch reads MELGISPIVTSGLIMQLLAG. Residues 97–117 are Cytoplasmic-facing; the sequence is AKIIEVGDTPKDRALFNGAQK. Residues 118-138 form a helical membrane-spanning segment; the sequence is LFGMIITIGQAIVYVMTGMYG. The Lumenal segment spans residues 139–144; the sequence is DPSEMG. A helical transmembrane segment spans residues 145-165; sequence AGICLLIIIQLFVAGLIVLLL. At 166–172 the chain is on the cytoplasmic side; that stretch reads DELLQKG. A helical membrane pass occupies residues 173 to 193; the sequence is YGLGSGISLFIATNICETIVW. At 194-240 the chain is on the lumenal side; it reads KAFSPTTVNTGRGTEFEGAIIALFHLLATRTDKVRALREAFYRQNLP. Residues 241–261 traverse the membrane as a helical segment; the sequence is NLMNLIATVFVFAVVIYFQGF. At 262–288 the chain is on the cytoplasmic side; it reads RVDLPIKSARYRGQYNTYPIKLFYTSN. The helical transmembrane segment at 289–309 threads the bilayer; the sequence is IPIILQSALVSNLYVISQMLS. The Lumenal segment spans residues 310-354; the sequence is TRFSGNFLVNLLGTWSDTSSGGPARAYPVGGLCYYLSPPESFGSV. The chain crosses the membrane as a helical span at residues 355 to 375; it reads LDDPVHAVIYIVFMLGSCAFF. The Cytoplasmic portion of the chain corresponds to 376–420; that stretch reads SKTWIEVSGSSAKDVAKQLKEQQMVMRGHRETSMVHELNRYIPTA. The helical transmembrane segment at 421 to 441 threads the bilayer; sequence AAFGGLCIGGLSVMADFLGAI. At 442–445 the chain is on the lumenal side; it reads GSGT. The chain crosses the membrane as a helical span at residues 446–462; that stretch reads GILLAVTIIYQYFEIFV. The Cytoplasmic segment spans residues 463-476; the sequence is KEQSEVGSMGALLF.

Belongs to the SecY/SEC61-alpha family. In terms of assembly, the SEC61 channel-forming translocon complex consists of channel-forming core components SEC61A1, SEC61B and SEC61G and different auxiliary components such as SEC62 and SEC63. The SEC61 channel associates with the multi-pass translocon (MPT) complex.

It localises to the endoplasmic reticulum membrane. In terms of biological role, component of SEC61 channel-forming translocon complex that mediates transport of signal peptide-containing precursor polypeptides across the endoplasmic reticulum (ER). Forms a ribosome receptor and a gated pore in the ER membrane, both functions required for cotranslational translocation of nascent polypeptides. May cooperate with auxiliary protein SEC62, SEC63 and HSPA5/BiP to enable post-translational transport of small presecretory proteins. The SEC61 channel is also involved in ER membrane insertion of transmembrane proteins: it mediates membrane insertion of the first few transmembrane segments of proteins, while insertion of subsequent transmembrane regions of multi-pass membrane proteins is mediated by the multi-pass translocon (MPT) complex. Plays a role in the pronephric kidney tubule development. The sequence is that of Protein transport protein Sec61 subunit alpha-like 1 (sec61al1) from Danio rerio (Zebrafish).